We begin with the raw amino-acid sequence, 159 residues long: Large ribosomal subunit protein uL15 (159 aa).

Residues 1–11 (MKLNELRDNEG) are compositionally biased toward basic and acidic residues. The interval 1 to 40 (MKLNELRDNEGARYQSKRLGRGIGSGKGKTSGKGVKGQTS) is disordered. Over residues 21-35 (RGIGSGKGKTSGKGV) the composition is skewed to gly residues.

It belongs to the universal ribosomal protein uL15 family. As to quaternary structure, part of the 50S ribosomal subunit.

Its function is as follows. Binds to the 23S rRNA. This Paramagnetospirillum magneticum (strain ATCC 700264 / AMB-1) (Magnetospirillum magneticum) protein is Large ribosomal subunit protein uL15.